Reading from the N-terminus, the 607-residue chain is Rap1 GTPase-GDP dissociation stimulator 1-A (607 aa).

5 ARM repeats span residues 79 to 118 (ELMRIPCVEAGLIPPLVQLLHSKDQEVLLQTGRALGNICY), 170 to 211 (DSLQ…NLAE), 347 to 390 (DGNC…NLAI), 391 to 431 (PVVN…MLID), and 479 to 519 (SKDV…LIAA).

In terms of assembly, interacts with ralB. Probably interacts with the post-translationally isoprenylated (geranyl-geranylation) forms of ral proteins. Interacts with both GDP-bound and GTP-bound forms of ralA, but interaction is much stronger with ralA-GDP. Weakly expressed in adult tissues with highest levels found in spleen, kidney, skin and A6 cells.

It is found in the cytoplasm. Its subcellular location is the cytosol. It localises to the endoplasmic reticulum. The protein localises to the mitochondrion. Functionally, stimulates GDP/GTP exchange reaction of a group of small GTP-binding proteins (G proteins) including Rap1a/Rap1b, RhoA, RhoB and KRas, by stimulating the dissociation of GDP from and the subsequent binding of GTP to each small G protein. The chain is Rap1 GTPase-GDP dissociation stimulator 1-A (rap1gds1-a) from Xenopus laevis (African clawed frog).